We begin with the raw amino-acid sequence, 324 residues long: MSNMPDQRRGPWSAGEDQRLIKLVKDLGPGNWVNVARILGTRTPKQCRERWHQNLKPGLNHGPMTQEEAAIIVREVDLKGPRWADIARKLQGRSDNAVKNYWNGLNNRKKNQLRRQSAPRRVSASDVLRSSPGQLPRAHMQRPIRYPQDIYTGSRRPSSPSSFNDSLHHRVHESIEWFPSRPQQQQQQQQQQARCTTPFTSFYPPSHAFPTTDGYQDGSDGPTGSTLRLLTPPTSRRLAPFSTLPSPTTSSIGDLDEFDRRQLAAFAPPAAYRRPSLPFPQQSSMGYLPSATEYLPTAPSSPIALIQRDEKNHARIPVTSLLCS.

HTH myb-type domains lie at methionine 4–leucine 59 and asparagine 60–lysine 110. The segment at asparagine 107 to threonine 231 is disordered. Positions arginine 155–aspartate 165 are enriched in polar residues. The segment covering serine 166–isoleucine 175 has biased composition (basic and acidic residues). 2 stretches are compositionally biased toward low complexity: residues glutamine 183 to glutamine 192 and proline 222 to threonine 231.

It localises to the nucleus. In Neurospora crassa (strain ATCC 24698 / 74-OR23-1A / CBS 708.71 / DSM 1257 / FGSC 987), this protein is Myb-like DNA-binding protein myb-1 (rca-1).